An 823-amino-acid polypeptide reads, in one-letter code: Adhesion G protein-coupled receptor E2 (823 aa).

An N-terminal signal peptide occupies residues 1 to 23 (MGGRVFLVFLAFCVWLTLPGAET). The Extracellular portion of the chain corresponds to 24 to 540 (QDSRGCARWC…EEDPVLTVIT (517 aa)). The 42-residue stretch at 25–66 (DSRGCARWCPQDSSCVNATACRCNPGFSSFSEIITTPMETCD) folds into the EGF-like 1 domain. 15 disulfide bridges follow: C29–C39, C33–C45, C47–C65, C71–C85, C79–C94, C96–C117, C123–C136, C130–C145, C147–C161, C167–C180, C174–C189, C191–C210, C216–C229, C223–C238, and C240–C259. N-linked (GlcNAc...) asparagine glycosylation occurs at N41. In terms of domain architecture, EGF-like 2; calcium-binding spans 67–118 (DINECATLSKVSCGKFSDCWNTEGSYDCVCSPGYEPVSGAKTFKNESENTCQ). N-linked (GlcNAc...) asparagine glycosylation occurs at N111. Residues 119–162 (DVDECQQNPRLCKSYGTCVNTLGSYTCQCLPGFKLKPEDPKLCT) form the EGF-like 3; calcium-binding domain. An EGF-like 4; calcium-binding domain is found at 163 to 211 (DVNECTSGQNPCHSSTHCLNNVGSYQCRCRPGWQPIPGSPNGPNNTVCE). The N-linked (GlcNAc...) asparagine glycan is linked to N206. The region spanning 212–260 (DVDECSSGQHQCDSSTVCFNTVGSYSCRCRPGWKPRHGIPNNQKDTVCE) is the EGF-like 5; calcium-binding domain. N-linked (GlcNAc...) asparagine glycosylation is found at N298, N347, N354, N456, and N460. A GAIN-B domain is found at 354 to 530 (NFSYPAGTEL…AVLMAHYDVQ (177 aa)). Disulfide bonds link C482–C512 and C500–C514. The GPS stretch occupies residues 482–530 (CVFWEHGQNGCGHWATTGCSTIGTRDTSTICRCTHLSSFAVLMAHYDVQ). The chain crosses the membrane as a helical span at residues 541–561 (YMGLSVSLLCLLLAALTFLLC). Residues 562–569 (KAIQNTST) lie on the Cytoplasmic side of the membrane. Residues 570 to 590 (SLHLQLSLCLFLAHLLFLVAI) form a helical membrane-spanning segment. The Extracellular segment spans residues 591–605 (DQTGHKVLCSIIAGT). The helical transmembrane segment at 606–626 (LHYLYLATLTWMLLEALYLFL) threads the bilayer. The Cytoplasmic segment spans residues 627-644 (TARNLTVVNYSSINRFMK). Residues 645 to 665 (KLMFPVGYGVPAVTVAISAAS) form a helical membrane-spanning segment. Topologically, residues 666–683 (RPHLYGTPSRCWLQPEKG) are extracellular. The chain crosses the membrane as a helical span at residues 684–704 (FIWGFLGPVCAIFSVNLVLFL). Topologically, residues 705-735 (VTLWILKNRLSSLNSEVSTLRNTRMLAFKAT) are cytoplasmic. Residues 736–756 (AQLFILGCTWCLGILQVGPAA) form a helical membrane-spanning segment. Residues 757–760 (RVMA) are Extracellular-facing. A helical membrane pass occupies residues 761–781 (YLFTIINSLQGVFIFLVYCLL). Residues 782 to 823 (SQQVREQYGKWSKGIRKLKTESEMHTLSSSAKADTSKPSTVN) lie on the Cytoplasmic side of the membrane.

Belongs to the G-protein coupled receptor 2 family. Adhesion G-protein coupled receptor (ADGR) subfamily. As to quaternary structure, forms a heterodimer, consisting of a large extracellular region non-covalently linked to a seven-transmembrane moiety. Interacts with chondroitin sulfate; the interaction with chondroitin sulfate is calcium-dependent. Interacts with CD55. Post-translationally, autoproteolytically cleaved into 2 subunits, an extracellular alpha subunit and a seven-transmembrane beta subunit. As to expression, expression is restricted to myeloid cells. Highest expression was found in peripheral blood leukocytes, followed by spleen and lymph nodes, with intermediate to low levels in thymus, bone marrow, fetal liver, placenta, and lung, and no expression in heart, brain, skeletal muscle, kidney, or pancreas. Expression is also detected in monocyte/macrophage and Jurkat cell lines but not in other cell lines tested. High expression in mast cells.

It is found in the cell membrane. The protein localises to the cell projection. The protein resides in the ruffle membrane. In terms of biological role, cell surface receptor that binds to the chondroitin sulfate moiety of glycosaminoglycan chains and promotes cell attachment. Promotes granulocyte chemotaxis, degranulation and adhesion. In macrophages, promotes the release of inflammatory cytokines, including IL8 and TNF. Signals probably through G-proteins. Is a regulator of mast cell degranulation. This chain is Adhesion G protein-coupled receptor E2, found in Homo sapiens (Human).